The sequence spans 329 residues: Red chlorophyll catabolite reductase 1, chloroplastic (329 aa).

The span at Met1–Thr11 shows a compositional bias: pro residues. The transit peptide at Met1–Arg50 directs the protein to the chloroplast. Residues Met1–Glu61 are disordered. Low complexity-rich tracts occupy residues Ser12–Leu28 and Ser46–Ala59. Red chlorophyll catabolite-binding positions include Glu163, Tyr216 to Ser218, and Asp299.

As to expression, expressed in leaves. Expressed at low levels in roots, stems, panicles and seeds.

It localises to the plastid. The protein resides in the chloroplast. The catalysed reaction is primary fluorescent chlorophyll catabolite + 2 oxidized [2Fe-2S]-[ferredoxin] = red chlorophyll catabolite + 2 reduced [2Fe-2S]-[ferredoxin] + 3 H(+). It participates in porphyrin-containing compound metabolism; chlorophyll degradation. Catalyzes the key reaction of chlorophyll catabolism, porphyrin macrocycle cleavage of pheophorbide a (pheide a) to a primary fluorescent catabolite (pFCC). Works in a two-step reaction with pheophorbide a oxygenase (PaO) by reducing the C20/C1 double bond of the intermediate, RCC. Belongs to the chlorophyll catabolic enzymes (CCEs). May play a role in senescence and response to wounding. The sequence is that of Red chlorophyll catabolite reductase 1, chloroplastic from Oryza sativa subsp. japonica (Rice).